We begin with the raw amino-acid sequence, 2922 residues long: Small ribosomal subunit protein uS4c (2922 aa).

The S4 RNA-binding domain occupies 111-174 (MRLDNIVFRL…ISMELVSRFL (64 aa)).

The protein belongs to the universal ribosomal protein uS4 family. Part of the 30S ribosomal subunit. Contacts protein S5. The interaction surface between S4 and S5 is involved in control of translational fidelity.

It is found in the plastid. It localises to the chloroplast. One of the primary rRNA binding proteins, it binds directly to 16S rRNA where it nucleates assembly of the body of the 30S subunit. Its function is as follows. With S5 and S12 plays an important role in translational accuracy. The polypeptide is Small ribosomal subunit protein uS4c (rps4) (Stigeoclonium helveticum (Green alga)).